We begin with the raw amino-acid sequence, 207 residues long: Probable RNA 2'-phosphotransferase (207 aa).

It belongs to the KptA/TPT1 family.

Functionally, removes the 2'-phosphate from RNA via an intermediate in which the phosphate is ADP-ribosylated by NAD followed by a presumed transesterification to release the RNA and generate ADP-ribose 1''-2''-cyclic phosphate (APPR&gt;P). May function as an ADP-ribosylase. In Methanosarcina acetivorans (strain ATCC 35395 / DSM 2834 / JCM 12185 / C2A), this protein is Probable RNA 2'-phosphotransferase.